A 209-amino-acid polypeptide reads, in one-letter code: Redox-sensing transcriptional repressor Rex (209 aa).

Positions 16–55 (LYYRFIQNLSLSGKQRVSSAELSEAVKVDSATIRRDFSYF) form a DNA-binding region, H-T-H motif. 90 to 95 (GVGNLG) contributes to the NAD(+) binding site.

The protein belongs to the transcriptional regulatory Rex family. In terms of assembly, homodimer.

It localises to the cytoplasm. Functionally, modulates transcription in response to changes in cellular NADH/NAD(+) redox state. This Bacillus cereus (strain Q1) protein is Redox-sensing transcriptional repressor Rex.